Reading from the N-terminus, the 191-residue chain is CASP-like protein 1D1 (191 aa).

The Cytoplasmic portion of the chain corresponds to 1-22 (MTSTSKDTPESGYAVPPPNLFG). A helical membrane pass occupies residues 23–43 (VDFGLRLLLLASAVSALVVLV). Residues 44 to 73 (TSKQTESIPTSLPPPFPAFISRDAKFQHSP) lie on the Extracellular side of the membrane. Residues 74-94 (AFIYLLVALSVTCFYSIITMV) traverse the membrane as a helical segment. Topologically, residues 95–118 (ASFAAITSPSSSPRMLFHLVLSDA) are cytoplasmic. The chain crosses the membrane as a helical span at residues 119 to 139 (VMAGVMASAAGTAGSVAYLGL). Over 140-160 (KGNSHVNWNKVCNVYDKFCRH) the chain is Extracellular. Residues 161–181 (VGSSAAVSLVASVLLVSLVVL) form a helical membrane-spanning segment. The Cytoplasmic portion of the chain corresponds to 182-191 (SSYSLYRRCR).

It belongs to the Casparian strip membrane proteins (CASP) family. In terms of assembly, homodimer and heterodimers.

Its subcellular location is the cell membrane. This is CASP-like protein 1D1 from Musa acuminata (Banana).